Consider the following 456-residue polypeptide: Argininosuccinate lyase (456 aa).

It belongs to the lyase 1 family. Argininosuccinate lyase subfamily.

Its subcellular location is the cytoplasm. It carries out the reaction 2-(N(omega)-L-arginino)succinate = fumarate + L-arginine. It participates in amino-acid biosynthesis; L-arginine biosynthesis; L-arginine from L-ornithine and carbamoyl phosphate: step 3/3. The protein is Argininosuccinate lyase of Carboxydothermus hydrogenoformans (strain ATCC BAA-161 / DSM 6008 / Z-2901).